We begin with the raw amino-acid sequence, 406 residues long: Tyrosine--tRNA ligase (406 aa).

L-tyrosine is bound at residue Tyr34. The 'HIGH' region motif lies at 39-48 (PTADSLHVGH). Residues Tyr167 and Gln171 each contribute to the L-tyrosine site. The 'KMSKS' region motif lies at 227-231 (KMGKT). An ATP-binding site is contributed by Lys230. In terms of domain architecture, S4 RNA-binding spans 339 to 404 (RKIVDVLFEA…GKKEYHRLLV (66 aa)).

Belongs to the class-I aminoacyl-tRNA synthetase family. TyrS type 1 subfamily. In terms of assembly, homodimer.

The protein resides in the cytoplasm. It catalyses the reaction tRNA(Tyr) + L-tyrosine + ATP = L-tyrosyl-tRNA(Tyr) + AMP + diphosphate + H(+). Catalyzes the attachment of tyrosine to tRNA(Tyr) in a two-step reaction: tyrosine is first activated by ATP to form Tyr-AMP and then transferred to the acceptor end of tRNA(Tyr). The sequence is that of Tyrosine--tRNA ligase from Caldanaerobacter subterraneus subsp. tengcongensis (strain DSM 15242 / JCM 11007 / NBRC 100824 / MB4) (Thermoanaerobacter tengcongensis).